A 446-amino-acid chain; its full sequence is Phosphoglucosamine mutase (446 aa).

S103 (phosphoserine intermediate) is an active-site residue. Mg(2+) is bound by residues S103, D242, D244, and D246. S103 carries the phosphoserine modification.

It belongs to the phosphohexose mutase family. The cofactor is Mg(2+). Post-translationally, activated by phosphorylation.

It carries out the reaction alpha-D-glucosamine 1-phosphate = D-glucosamine 6-phosphate. Catalyzes the conversion of glucosamine-6-phosphate to glucosamine-1-phosphate. This Vibrio atlanticus (strain LGP32) (Vibrio splendidus (strain Mel32)) protein is Phosphoglucosamine mutase.